Consider the following 984-residue polypeptide: Mineralocorticoid receptor (984 aa).

The interval 1–602 (METKGYHSLP…STGSSRPSKI (602 aa)) is modulating. Residues 231–243 (QGTPLTCSPNVEN) show a composition bias toward polar residues. 2 disordered regions span residues 231–329 (QGTP…AAST) and 347–373 (GTSAGSSTLRDVVPSPDTQEKGAQEVP). Residues Ser-250, Ser-259, Ser-283, Ser-287, and Ser-299 each carry the phosphoserine modification. Residues 259–291 (SPLSSPLSSMKSSISSPPSHCSVKSPVSSPNNV) are compositionally biased toward low complexity. The segment covering 292–329 (TLRSSVSSPANINNSRCSVSSPSNTNNRSTLSSPAAST) has biased composition (polar residues). Zn(2+) is bound by residues Cys-603, Cys-606, Cys-620, Cys-623, Cys-639, Cys-645, Cys-655, and Cys-658. 2 consecutive NR C4-type zinc fingers follow at residues 603 to 623 (CLVCGDEASGCHYGVVTCGSC) and 639 to 663 (CAGRNDCIIDKIRRKNCPACRLQKC). Positions 603 to 668 (CLVCGDEASG…RLQKCLQAGM (66 aa)) form a DNA-binding region, nuclear receptor. The tract at residues 669-725 (NLGARKSKKLGKLKGIHEEQPQQQQPPPPPPPPQSPEEGTTYIAPAKEPSVNTALVP) is hinge. The tract at residues 684–710 (IHEEQPQQQQPPPPPPPPQSPEEGTTY) is disordered. Residues 692 to 703 (QQPPPPPPPPQS) are compositionally biased toward pro residues. One can recognise an NR LBD domain in the interval 726 to 964 (QLSTISRALT…EFPAMLVEII (239 aa)). Asn-770 and Gln-776 together coordinate 21-hydroxyprogesterone. Asn-770 and Gln-776 together coordinate aldosterone. Asn-770 and Gln-776 together coordinate progesterone. The tract at residues 782–785 (KWAK) is important for coactivator binding. 21-hydroxyprogesterone contacts are provided by Arg-817 and Thr-945. 2 residues coordinate aldosterone: Arg-817 and Thr-945. Residues Arg-817 and Thr-945 each coordinate progesterone.

This sequence belongs to the nuclear hormone receptor family. NR3 subfamily. As to quaternary structure, heteromultimeric cytoplasmic complex with HSP90, HSP70, and FKBP4, in the absence of ligand. After ligand binding, it translocates to the nucleus and binds to DNA as a homodimer and as a heterodimer with NR3C1. May interact with HSD11B2 in the absence of ligand. Binds the coactivators NCOA1, NCOA2, TIF1 and NRIP1. Phosphorylated. In terms of tissue distribution, ubiquitous. Highly expressed in distal tubules, convoluted tubules and cortical collecting duct in kidney, and in sweat glands. Detected at lower levels in cardiomyocytes, in epidermis and in colon enterocytes.

It localises to the cytoplasm. The protein localises to the nucleus. It is found in the endoplasmic reticulum membrane. In terms of biological role, receptor for both mineralocorticoids (MC) such as aldosterone and glucocorticoids (GC) such as corticosterone or cortisol. Binds to mineralocorticoid response elements (MRE) and transactivates target genes. The effect of MC is to increase ion and water transport and thus raise extracellular fluid volume and blood pressure and lower potassium levels. This Homo sapiens (Human) protein is Mineralocorticoid receptor (NR3C2).